The primary structure comprises 446 residues: Chromosomal replication initiator protein DnaA (446 aa).

Positions 1-72 are domain I, interacts with DnaA modulators; the sequence is MENILDLWNQ…ADTIYELTGE (72 aa). Residues 72 to 109 are domain II; the sequence is EELSVKFVIPQNQDEENFLPKPQVKKAAKEEPSDFPQS. Residues 110 to 326 form a domain III, AAA+ region region; sequence MLNPKYTFDT…GALIRVVAYS (217 aa). ATP-binding residues include Gly154, Gly156, Lys157, and Thr158. The segment at 327–446 is domain IV, binds dsDNA; that stretch reads SLINKDINAD…QVKEIKELLK (120 aa).

It belongs to the DnaA family. As to quaternary structure, oligomerizes as a right-handed, spiral filament on DNA at oriC.

The protein resides in the cytoplasm. Functionally, plays an essential role in the initiation and regulation of chromosomal replication. ATP-DnaA binds to the origin of replication (oriC) to initiate formation of the DNA replication initiation complex once per cell cycle. Binds the DnaA box (a 9 base pair repeat at the origin) and separates the double-stranded (ds)DNA. Forms a right-handed helical filament on oriC DNA; dsDNA binds to the exterior of the filament while single-stranded (ss)DNA is stabiized in the filament's interior. The ATP-DnaA-oriC complex binds and stabilizes one strand of the AT-rich DNA unwinding element (DUE), permitting loading of DNA polymerase. After initiation quickly degrades to an ADP-DnaA complex that is not apt for DNA replication. Binds acidic phospholipids. This is Chromosomal replication initiator protein DnaA from Bacillus velezensis (strain DSM 23117 / BGSC 10A6 / LMG 26770 / FZB42) (Bacillus amyloliquefaciens subsp. plantarum).